Consider the following 324-residue polypeptide: Galactosylgalactosylxylosylprotein 3-beta-glucuronosyltransferase 2 (324 aa).

The Cytoplasmic portion of the chain corresponds to 1-2 (MK). Residues 3-23 (SALCSRFFILLPWILIVIIML) traverse the membrane as a helical; Signal-anchor for type II membrane protein segment. The Lumenal segment spans residues 24 to 324 (DVDPRRPAPQ…YHLDTVNIEV (301 aa)). A disordered region spans residues 50–78 (SRVPLRRSSPGRDAAEKRNESRPQLQPEP). Asn-68 carries N-linked (GlcNAc...) asparagine glycosylation. UDP-alpha-D-glucuronate contacts are provided by residues 88 to 90 (PTY), Asp-119, Arg-156, Arg-161, and 186 to 188 (DDD). Asp-188 contacts Mn(2+). An interaction with galactose moiety of substrate glycoprotein region spans residues 235 to 244 (WREDRPFAID). The Proton donor/acceptor role is filled by Glu-274. N-linked (GlcNAc...) asparagine glycosylation occurs at Asn-293. Residue 301-303 (HTR) coordinates UDP-alpha-D-glucuronate.

The protein belongs to the glycosyltransferase 43 family. As to quaternary structure, homodimer. Mn(2+) serves as cofactor. As to expression, expressed in brain, but not in liver and kidney.

Its subcellular location is the golgi apparatus membrane. The catalysed reaction is 3-O-(beta-D-galactosyl-(1-&gt;3)-beta-D-galactosyl-(1-&gt;4)-beta-D-xylosyl)-L-seryl-[protein] + UDP-alpha-D-glucuronate = 3-O-(beta-D-GlcA-(1-&gt;3)-beta-D-Gal-(1-&gt;3)-beta-D-Gal-(1-&gt;4)-beta-D-Xyl)-L-seryl-[protein] + UDP + H(+). It functions in the pathway protein modification; protein glycosylation. Functionally, involved in the biosynthesis of L2/HNK-1 carbohydrate epitope on both glycolipids and glycoproteins. In Mus musculus (Mouse), this protein is Galactosylgalactosylxylosylprotein 3-beta-glucuronosyltransferase 2 (B3gat2).